Reading from the N-terminus, the 203-residue chain is Methyltransferase-like 26 (203 aa).

The protein belongs to the UPF0585 family.

This is Methyltransferase-like 26 from Xenopus tropicalis (Western clawed frog).